The chain runs to 270 residues: UPF0162 protein VC_2176 (270 aa).

It belongs to the UPF0162 family.

This chain is UPF0162 protein VC_2176, found in Vibrio cholerae serotype O1 (strain ATCC 39315 / El Tor Inaba N16961).